Here is a 129-residue protein sequence, read N- to C-terminus: Histone H3 (129 aa).

A disordered region spans residues 1–36; the sequence is MSRTKETARAKRTITSKKSKKAPSGASGVKRSHRRW. The segment covering 10–21 has biased composition (basic residues); it reads AKRTITSKKSKK.

It belongs to the histone H3 family. As to quaternary structure, the nucleosome is a histone octamer containing two molecules each of H2A, H2B, H3 and H4 assembled in one H3-H4 heterotetramer and two H2A-H2B heterodimers. The octamer wraps approximately 147 bp of DNA.

The protein resides in the nucleus. The protein localises to the chromosome. Its function is as follows. Core component of nucleosome. Nucleosomes wrap and compact DNA into chromatin, limiting DNA accessibility to the cellular machineries which require DNA as a template. Histones thereby play a central role in transcription regulation, DNA repair, DNA replication and chromosomal stability. DNA accessibility is regulated via a complex set of post-translational modifications of histones, also called histone code, and nucleosome remodeling. In Leishmania infantum, this protein is Histone H3.